A 701-amino-acid chain; its full sequence is Ubiquitin thioesterase zranb1-A (701 aa).

3 consecutive RanBP2-type zinc fingers follow at residues 3–33 (EHGIKWGCEYCTYENWPSAIKCTMCRAPRPS), 79–108 (PSSKWSCQICTYLNWPRAIRCTQCLSQRRT), and 143–173 (IKGQHWTCSACTYENCAKAKKCVVCDHPTPN). Positions 10, 13, 24, 27, 85, 88, 99, and 102 each coordinate Zn(2+). The segment covering 108–121 (TRSPTESPQSSGSG) has biased composition (polar residues). A disordered region spans residues 108–129 (TRSPTESPQSSGSGLRSIPSPI). Zn(2+) contacts are provided by cysteine 150, cysteine 153, cysteine 164, and cysteine 167. The interval 198–219 (WRGGCSSSNSQRRSPPTSKRDS) is disordered. A compositionally biased stretch (polar residues) spans 202–214 (CSSSNSQRRSPPT). ANK repeat units lie at residues 253–283 (RKTDWLFLNACVGIVEGDLSAVESYKTSGGD) and 306–333 (YTLVHLSIRFQRQDMLAILLTEVSQHAA). The OTU domain maps to 425–585 (LYALWNRTAG…RGHFSALVAM (161 aa)). The Nucleophile role is filled by cysteine 436. The active-site Proton acceptor is the histidine 578.

It belongs to the peptidase C64 family.

It is found in the cytoplasm. The protein localises to the nucleus. The enzyme catalyses Thiol-dependent hydrolysis of ester, thioester, amide, peptide and isopeptide bonds formed by the C-terminal Gly of ubiquitin (a 76-residue protein attached to proteins as an intracellular targeting signal).. In terms of biological role, ubiquitin thioesterase, which specifically hydrolyzes 'Lys-29'-linked and 'Lys-33'-linked diubiquitin. Also cleaves 'Lys-63'-linked chains, but with 40-fold less efficiency compared to 'Lys-29'-linked ones. Positive regulator of the Wnt signaling pathway that deubiquitinates apc protein, a negative regulator of Wnt-mediated transcription. Acts as a regulator of autophagy by mediating deubiquitination of pik3c3/vps34, thereby promoting autophagosome maturation. Plays a role in the regulation of cell morphology and cytoskeletal organization. Required in the stress fiber dynamics and cell migration. The polypeptide is Ubiquitin thioesterase zranb1-A (zranb1-a) (Xenopus laevis (African clawed frog)).